Here is a 231-residue protein sequence, read N- to C-terminus: LexA repressor (231 aa).

Positions 26–46 form a DNA-binding region, H-T-H motif; sequence FEEMKEALDLKSKSGIHRLIG. Residues serine 152 and lysine 190 each act as for autocatalytic cleavage activity in the active site.

This sequence belongs to the peptidase S24 family. In terms of assembly, homodimer.

The enzyme catalyses Hydrolysis of Ala-|-Gly bond in repressor LexA.. Represses a number of genes involved in the response to DNA damage (SOS response), including recA and lexA. In the presence of single-stranded DNA, RecA interacts with LexA causing an autocatalytic cleavage which disrupts the DNA-binding part of LexA, leading to derepression of the SOS regulon and eventually DNA repair. This is LexA repressor from Acidiphilium cryptum (strain JF-5).